The following is a 454-amino-acid chain: Epsin-1 (454 aa).

One can recognise an ENTH domain in the interval 11-143; that stretch reads NLVKGYSSTQ…SDDERLNEER (133 aa). Disordered regions lie at residues 142–195 and 292–350; these read ERNM…EDYE and YLAS…GNQS. The segment covering 149-160 has biased composition (basic residues); it reads GRNRKGRRRRGT. Thr-160 bears the Phosphothreonine mark. Ser-163 is modified (phosphoserine). 2 UIM domains span residues 165-184 and 189-208; these read ENDD…AEED and KQDE…EELK. Phosphothreonine is present on Thr-180. Residues 180–191 show a composition bias toward basic and acidic residues; it reads TAEEDERRRKQD. Over residues 292–302 the composition is skewed to low complexity; sequence YLASMQQQQQA. 2 stretches are compositionally biased toward polar residues: residues 303–329 and 340–350; these read MSNN…ASSP and PLIQNRTGNQS. Residue Ser-328 is modified to Phosphoserine. Lys-357 is covalently cross-linked (Glycyl lysine isopeptide (Lys-Gly) (interchain with G-Cter in ubiquitin)). Phosphothreonine occurs at positions 364, 366, 384, 386, and 388. Residues 384–398 are compositionally biased toward polar residues; sequence TKTGTFINSQGTGYR. The interval 384-405 is disordered; it reads TKTGTFINSQGTGYRQVSDDPN. Thr-395 and Thr-415 each carry phosphothreonine; by PRK1. Polar residues predominate over residues 418 to 428; the sequence is PSTSVVPTQTG. The tract at residues 418–454 is disordered; sequence PSTSVVPTQTGYGFGNQSQQQSQNNGSNNRGYTLIDL. The span at 432–446 shows a compositional bias: low complexity; the sequence is GNQSQQQSQNNGSNN. The interval 447–454 is clathrin-binding; it reads RGYTLIDL.

Belongs to the epsin family. In terms of assembly, interacts with EDE1 and PAN1.

The protein localises to the cytoplasm. The protein resides in the membrane. In terms of biological role, binds to membranes enriched in phosphatidylinositol 3,5-bisphosphate (PtdIns(3,5)P2) and phosphatidylinositol 4,5-bisphosphate (PtdIns(4,5)P2). Required for endocytosis and localization of actin. Negatively regulated via phosphorylation. This Saccharomyces cerevisiae (strain ATCC 204508 / S288c) (Baker's yeast) protein is Epsin-1 (ENT1).